Reading from the N-terminus, the 288-residue chain is MPSVCHTSPIEKIIQQGHRIQNDSLIPSKRTKLAHTELTAHYATEDSHVEKHFLHNGSNFDGIDNVRYQNQPSPLTFITPNNTVDSSDWVPQFSSMKIDDSLEFSSEYKRLYSNYESQQRLNSSRQHLPFKNCMIRKTSCTYPPQKTLRQQRQGNRDNPTDAFQFDAEFQVLEREIQKERYEPITRRDEKWFDQDQSELQRIATDIVKCCTPPPSSASSSSTLSSSVESKLSESKFIQLMRNISSGDVTLKKNADGNSASELFSSNNGELVGNRHIFVKDEIHKDILD.

Cys5 is covalently cross-linked (Glycyl cysteine thioester (Cys-Gly) (interchain with G-Cter in ubiquitin)).

This sequence belongs to the peroxin-21 family. Interacts with PEX7. Interacts with PEX13. Interacts with SES1. In terms of processing, monoubiquitinated at Cys-5; acts as a signal for PEX21 extraction and is required for proper export from peroxisomes and recycling.

Its subcellular location is the cytoplasm. The protein resides in the cytosol. It is found in the peroxisome. In terms of biological role, receptor that mediates peroxisomal import of proteins containing a C-terminal PTS2-type peroxisomal targeting signal via its interaction with PEX7. Interaction with PEX7 only takes place when PEX7 is associated with cargo proteins containing a PTS2 peroxisomal targeting signal. PEX7 along with PTS2-containing cargo proteins are then translocated through the PEX13-PEX14 docking complex together with PEX21. Acts as an activator of the seryl-tRNA synthetase SES1 by increasing its binding to tRNA. The polypeptide is Peroxisomal protein PEX21 (PEX21) (Saccharomyces cerevisiae (strain ATCC 204508 / S288c) (Baker's yeast)).